Consider the following 292-residue polypeptide: Phosphatidylserine decarboxylase proenzyme (292 aa).

Active-site charge relay system; for autoendoproteolytic cleavage activity residues include Asp-89, His-146, and Ser-252. The active-site Schiff-base intermediate with substrate; via pyruvic acid; for decarboxylase activity is the Ser-252. At Ser-252 the chain carries Pyruvic acid (Ser); by autocatalysis.

This sequence belongs to the phosphatidylserine decarboxylase family. PSD-B subfamily. Prokaryotic type I sub-subfamily. In terms of assembly, heterodimer of a large membrane-associated beta subunit and a small pyruvoyl-containing alpha subunit. Pyruvate is required as a cofactor. Post-translationally, is synthesized initially as an inactive proenzyme. Formation of the active enzyme involves a self-maturation process in which the active site pyruvoyl group is generated from an internal serine residue via an autocatalytic post-translational modification. Two non-identical subunits are generated from the proenzyme in this reaction, and the pyruvate is formed at the N-terminus of the alpha chain, which is derived from the carboxyl end of the proenzyme. The autoendoproteolytic cleavage occurs by a canonical serine protease mechanism, in which the side chain hydroxyl group of the serine supplies its oxygen atom to form the C-terminus of the beta chain, while the remainder of the serine residue undergoes an oxidative deamination to produce ammonia and the pyruvoyl prosthetic group on the alpha chain. During this reaction, the Ser that is part of the protease active site of the proenzyme becomes the pyruvoyl prosthetic group, which constitutes an essential element of the active site of the mature decarboxylase.

The protein resides in the cell membrane. It catalyses the reaction a 1,2-diacyl-sn-glycero-3-phospho-L-serine + H(+) = a 1,2-diacyl-sn-glycero-3-phosphoethanolamine + CO2. The protein operates within phospholipid metabolism; phosphatidylethanolamine biosynthesis; phosphatidylethanolamine from CDP-diacylglycerol: step 2/2. Its function is as follows. Catalyzes the formation of phosphatidylethanolamine (PtdEtn) from phosphatidylserine (PtdSer). The polypeptide is Phosphatidylserine decarboxylase proenzyme (Shewanella baltica (strain OS223)).